Here is a 143-residue protein sequence, read N- to C-terminus: Cell division protein SepF (143 aa).

Belongs to the SepF family. As to quaternary structure, homodimer. Interacts with FtsZ.

The protein resides in the cytoplasm. In terms of biological role, cell division protein that is part of the divisome complex and is recruited early to the Z-ring. Probably stimulates Z-ring formation, perhaps through the cross-linking of FtsZ protofilaments. Its function overlaps with FtsA. The sequence is that of Cell division protein SepF from Geobacillus thermodenitrificans (strain NG80-2).